The chain runs to 625 residues: UvrABC system protein C (625 aa).

Residues 26-105 (LEPGVYFLRD…IKQHQPHFNT (80 aa)) enclose the GIY-YIG domain. Residues 215-250 (GELLEKLATKMLAASENLDFEQAATIRDQIRGLQAL) form the UVR domain.

Belongs to the UvrC family. In terms of assembly, interacts with UvrB in an incision complex.

It is found in the cytoplasm. In terms of biological role, the UvrABC repair system catalyzes the recognition and processing of DNA lesions. UvrC both incises the 5' and 3' sides of the lesion. The N-terminal half is responsible for the 3' incision and the C-terminal half is responsible for the 5' incision. The sequence is that of UvrABC system protein C from Microcystis aeruginosa (strain NIES-843 / IAM M-2473).